A 526-amino-acid chain; its full sequence is Na(+)/H(+) antiporter NhaB (526 aa).

The next 11 membrane-spanning stretches (helical) occupy residues 14–34 (FLGY…LVNP), 63–83 (CYPL…GMTS), 99–119 (MLLV…LFVF), 122–142 (LLLR…AAAF), 146–166 (FLDA…FYGI), 206–226 (LLMH…VGEP), 239–259 (FVSF…CGIL), 307–327 (AVIG…VGLI), 357–377 (FTAL…QQLF), 451–471 (ATPN…APLI), and 479–499 (VIMA…CVEF).

This sequence belongs to the NhaB Na(+)/H(+) (TC 2.A.34) antiporter family.

The protein localises to the cell inner membrane. It carries out the reaction 2 Na(+)(in) + 3 H(+)(out) = 2 Na(+)(out) + 3 H(+)(in). Functionally, na(+)/H(+) antiporter that extrudes sodium in exchange for external protons. This Pectobacterium carotovorum subsp. carotovorum (strain PC1) protein is Na(+)/H(+) antiporter NhaB.